Reading from the N-terminus, the 674-residue chain is Enzymatic polyprotein (674 aa).

Positions 40–130 (IELHCFVDTG…CQLYEPFIQF (91 aa)) are protease. The active site involves Asp-47. The Reverse transcriptase domain maps to 267 to 447 (LKVIKPSKSP…KKINFLGLEI (181 aa)).

The protein belongs to the caulimoviridae enzymatic polyprotein family.

It catalyses the reaction DNA(n) + a 2'-deoxyribonucleoside 5'-triphosphate = DNA(n+1) + diphosphate. In terms of biological role, encodes for at least two polypeptides: protease (PR) and reverse transcriptase (RT). The protease processes the polyprotein in cis. Reverse transcriptase is multifunctional enzyme that converts the viral RNA genome into dsDNA in viral cytoplasmic capsids. This enzyme displays a DNA polymerase activity that can copy either DNA or RNA templates, and a ribonuclease H (RNase H) activity that cleaves the RNA strand of RNA-DNA heteroduplexes in a partially processive 3'- to 5'-endonucleasic mode. Neo-synthesized pregenomic RNA (pgRNA) are encapsidated, and reverse-transcribed inside the nucleocapsid. Partial (+)DNA is synthesized from the (-)DNA template and generates the relaxed circular DNA (RC-DNA) genome. After budding and infection, the RC-DNA migrates in the nucleus, and is converted into a plasmid-like covalently closed circular DNA (cccDNA). This is Enzymatic polyprotein from Arabidopsis thaliana (Mouse-ear cress).